The sequence spans 49 residues: Large ribosomal subunit protein bL33B (49 aa).

This sequence belongs to the bacterial ribosomal protein bL33 family.

The protein is Large ribosomal subunit protein bL33B (rpmG2) of Staphylococcus epidermidis (strain ATCC 12228 / FDA PCI 1200).